The sequence spans 645 residues: Macrolide export ATP-binding/permease protein MacB (645 aa).

The region spanning 6–244 (IELEGIRRSY…SSIAVVPWQA (239 aa)) is the ABC transporter domain. 42 to 49 (GASGSGKS) is a binding site for ATP. 4 consecutive transmembrane segments (helical) span residues 274–294 (ALTL…MAIG), 526–546 (IAAI…LITV), 574–594 (AVVL…VIGV), and 596–616 (AALL…GALM).

It belongs to the ABC transporter superfamily. Macrolide exporter (TC 3.A.1.122) family. As to quaternary structure, homodimer.

It is found in the cell inner membrane. Non-canonical ABC transporter that contains transmembrane domains (TMD), which form a pore in the inner membrane, and an ATP-binding domain (NBD), which is responsible for energy generation. Confers resistance against macrolides. This is Macrolide export ATP-binding/permease protein MacB from Nitrobacter winogradskyi (strain ATCC 25391 / DSM 10237 / CIP 104748 / NCIMB 11846 / Nb-255).